We begin with the raw amino-acid sequence, 407 residues long: Subtilisin-like protease CPC735_013710 (407 aa).

Residues 1 to 17 form the signal peptide; the sequence is MQLLNLSLFFLLPFATA. A propeptide spanning residues 18–115 is cleaved from the precursor; the sequence is NPIPQDSQNI…VLPDQKIYLA (98 aa). Residues 31 to 114 form the Inhibitor I9 domain; it reads QYIVTLKDGL…SVLPDQKIYL (84 aa). The 284-residue stretch at 124–407 folds into the Peptidase S8 domain; it reads GWNLGYMSSK…VAYNGIQEML (284 aa). A glycan (N-linked (GlcNAc...) asparagine) is linked at Asn-145. Active-site charge relay system residues include Asp-162 and His-194. Residues Asn-241, Asn-254, and Asn-341 are each glycosylated (N-linked (GlcNAc...) asparagine). Residue Ser-350 is the Charge relay system of the active site. Asn-381 carries an N-linked (GlcNAc...) asparagine glycan.

This sequence belongs to the peptidase S8 family.

The protein localises to the secreted. Functionally, secreted subtilisin-like serine protease with keratinolytic activity that contributes to pathogenicity. The polypeptide is Subtilisin-like protease CPC735_013710 (Coccidioides posadasii (strain C735) (Valley fever fungus)).